We begin with the raw amino-acid sequence, 699 residues long: eEF1A lysine and N-terminal methyltransferase (699 aa).

M1 carries the post-translational modification N-acetylmethionine. S267 carries the phosphoserine modification. Positions 433-459 are disordered; sequence VSHKAQKKRKKDRKKQRPADAEDLPAA. The span at 436–448 shows a compositional bias: basic residues; the sequence is KAQKKRKKDRKKQ.

This sequence belongs to the methyltransferase superfamily. In terms of assembly, forms a tripartite complex containing GAB1, METTL13 and SPRY2. Within the complex interacts with GAB1 and SPRY2.

It localises to the cytoplasm. The protein resides in the nucleus. The protein localises to the mitochondrion. It catalyses the reaction L-lysyl-[protein] + S-adenosyl-L-methionine = N(6)-methyl-L-lysyl-[protein] + S-adenosyl-L-homocysteine + H(+). The catalysed reaction is N(6)-methyl-L-lysyl-[protein] + S-adenosyl-L-methionine = N(6),N(6)-dimethyl-L-lysyl-[protein] + S-adenosyl-L-homocysteine + H(+). It carries out the reaction N-terminal glycyl-L-lysyl-L-glutamyl-[protein] + 3 S-adenosyl-L-methionine = N-terminal N,N,N-trimethyl-glycyl-L-lysyl-L-glutamyl-[protein] + 3 S-adenosyl-L-homocysteine + 3 H(+). Its activity is regulated as follows. Protein N-terminal methyltransferase activity is inhibited by GTP and GDP. Dual methyltransferase that catalyzes methylation of elongation factor 1-alpha (EEF1A1 and EEF1A2) at two different positions, and is therefore involved in the regulation of mRNA translation. Via its C-terminus, methylates EEF1A1 and EEF1A2 at the N-terminal residue 'Gly-2'. Via its N-terminus dimethylates EEF1A1 and EEF1A2 at residue 'Lys-55'. Has no activity towards core histones H2A, H2B, H3 and H4. This Homo sapiens (Human) protein is eEF1A lysine and N-terminal methyltransferase.